We begin with the raw amino-acid sequence, 601 residues long: DNA ligase (601 aa).

Asp258 is an ATP binding site. Catalysis depends on Lys260, which acts as the N6-AMP-lysine intermediate. Arg265, Arg280, Glu310, Phe350, Arg427, and Lys433 together coordinate ATP.

This sequence belongs to the ATP-dependent DNA ligase family. The cofactor is Mg(2+). Ca(2+) serves as cofactor. Requires Mn(2+) as cofactor.

It catalyses the reaction ATP + (deoxyribonucleotide)n-3'-hydroxyl + 5'-phospho-(deoxyribonucleotide)m = (deoxyribonucleotide)n+m + AMP + diphosphate.. Its function is as follows. DNA ligase that seals nicks in double-stranded DNA during DNA replication, DNA recombination and DNA repair. Also has low activity with dATP. Inactive with NAD(+), CTP, GTP, UTP, dCTP, dGTP or dTTP. This Saccharolobus shibatae (strain ATCC 51178 / DSM 5389 / JCM 8931 / NBRC 15437 / B12) (Sulfolobus shibatae) protein is DNA ligase.